The primary structure comprises 103 residues: UPF0122 protein FN1394 (103 aa).

Belongs to the UPF0122 family.

Its function is as follows. Might take part in the signal recognition particle (SRP) pathway. This is inferred from the conservation of its genetic proximity to ftsY/ffh. May be a regulatory protein. The polypeptide is UPF0122 protein FN1394 (Fusobacterium nucleatum subsp. nucleatum (strain ATCC 25586 / DSM 15643 / BCRC 10681 / CIP 101130 / JCM 8532 / KCTC 2640 / LMG 13131 / VPI 4355)).